The primary structure comprises 160 residues: Small ribosomal subunit protein bS6 (160 aa).

Composition is skewed to basic and acidic residues over residues 94–119 (EEHE…RGGR) and 125–152 (RGDR…REDA). The segment at 94 to 160 (EEHEEGPSAM…DADTAAASEE (67 aa)) is disordered.

This sequence belongs to the bacterial ribosomal protein bS6 family.

Functionally, binds together with bS18 to 16S ribosomal RNA. The chain is Small ribosomal subunit protein bS6 from Rhodopseudomonas palustris (strain BisB5).